A 39-amino-acid polypeptide reads, in one-letter code: B melanoma antigen 4 (39 aa).

The N-terminal stretch at 1-17 (MAAGAVFLALSAQLLQA) is a signal peptide.

The protein belongs to the BAGE family. In terms of tissue distribution, not expressed in normal tissues except in testis. Expressed in melanoma, bladder and lung carcinomas.

It localises to the secreted. Its function is as follows. Unknown. Candidate gene encoding tumor antigens. This Homo sapiens (Human) protein is B melanoma antigen 4 (BAGE4).